The following is a 251-amino-acid chain: 3-deoxy-manno-octulosonate cytidylyltransferase (251 aa).

Belongs to the KdsB family.

It localises to the cytoplasm. It carries out the reaction 3-deoxy-alpha-D-manno-oct-2-ulosonate + CTP = CMP-3-deoxy-beta-D-manno-octulosonate + diphosphate. It functions in the pathway nucleotide-sugar biosynthesis; CMP-3-deoxy-D-manno-octulosonate biosynthesis; CMP-3-deoxy-D-manno-octulosonate from 3-deoxy-D-manno-octulosonate and CTP: step 1/1. The protein operates within bacterial outer membrane biogenesis; lipopolysaccharide biosynthesis. Its function is as follows. Activates KDO (a required 8-carbon sugar) for incorporation into bacterial lipopolysaccharide in Gram-negative bacteria. The polypeptide is 3-deoxy-manno-octulosonate cytidylyltransferase (Brucella abortus (strain 2308)).